Consider the following 134-residue polypeptide: Calvin cycle protein CP12-3, chloroplastic (134 aa).

Residues 1–21 (MISGSATASHGRVLLPSQRER) are disordered. Residues 1–42 (MISGSATASHGRVLLPSQRERRPVSTGSNILRFRETVPRQFS) constitute a chloroplast transit peptide. Cystine bridges form between C78–C87 and C120–C129.

The protein belongs to the CP12 family. As to quaternary structure, monomer. Component of a complex that contains two dimers of PRK, two tetramers of GAPDH and CP12. CP12 associates with GAPDH, causing its conformation to change. This GAPDH/CP12 complex binds PRK to form a half-complex (one unit). This unit probably dimerizes due partially to interactions between the enzymes of each unit. Post-translationally, contains two disulfide bonds; only the oxidized protein, with two disulfide bonds, is active in complex formation. The C-terminal disulfide is involved in the interaction with GAPDH and the N-terminal disulfide mediates the binding of PRK with this binary complex. Mostly expressed, at low levels, in stems and, to a lesser extent, in leaves and roots.

Its subcellular location is the plastid. The protein localises to the chloroplast. Its function is as follows. Acts as a linker essential in the assembly of a core complex of PRK/GAPDH. Coordinates the reversible inactivation of chloroplast enzymes GAPDH and PRK during darkness in photosynthetic tissues. In Arabidopsis thaliana (Mouse-ear cress), this protein is Calvin cycle protein CP12-3, chloroplastic (CP12-3).